The chain runs to 409 residues: Autophagy-related protein 21 (409 aa).

WD repeat units lie at residues 1 to 35, 221 to 261, 273 to 312, and 361 to 402; these read MKVL…KCFE, VHKG…TLQS, TRPC…QQNK, and KVDD…GECI. Positions 269-273 match the L/FRRG motif motif; the sequence is FRRGT.

Belongs to the WD repeat PROPPIN family.

It is found in the cytoplasm. The protein resides in the membrane. Its subcellular location is the vacuole membrane. Functionally, required for cytoplasm to vacuole transport (Cvt) vesicles formation and mitophagy. Involved in binding of phosphatidylethanolamine to ATG8 and in recruitment of ATG8 and ATG5 to the pre-autophagosomal structure. Protects ATG8 from ARG4-mediated cleavage. This chain is Autophagy-related protein 21 (ATG21), found in Eremothecium gossypii (strain ATCC 10895 / CBS 109.51 / FGSC 9923 / NRRL Y-1056) (Yeast).